Consider the following 37-residue polypeptide: MKIRASARKICEKCRLIRRRGRILIICSNPRHKQRQG.

Belongs to the bacterial ribosomal protein bL36 family.

The protein resides in the plastid. The protein localises to the chloroplast. This chain is Large ribosomal subunit protein bL36c, found in Populus alba (White poplar).